Reading from the N-terminus, the 343-residue chain is Leucine-rich repeat-containing protein 39 (343 aa).

LRR repeat units lie at residues 64–87, 88–110, 111–133, 134–156, 158–180, 181–203, 204–226, 228–249, 250–274, and 275–295; these read EEGRVILRIEKEEWKTLPPALVQL, SQIQEWQLHRIGLQRIPRFISSF, QSLIVLDLSRNSVTEIPKEIGKL, TRLRELLLSYNRVSYVPEELGCC, NLEKLELAMNRDLDELPTQLSNL, KKLSHLDLSMNQFTTIPDCVVNL, PSLEWLDMGSNILETLPDNIHRM, KLHTLWLPRNELEYLPDNISRM, KSLDTLVLSKNKLRDIPPLMEGMSN, and LRFVNFRDNPLTYDVTLPDLN.

Its subcellular location is the cytoplasm. The protein resides in the myofibril. It localises to the sarcomere. The protein localises to the m line. In terms of biological role, component of the sarcomeric M-band which plays a role in myocyte response to biomechanical stress. May regulate expression of other M-band proteins via an SRF-dependent pathway. Important for normal contractile function in heart. This is Leucine-rich repeat-containing protein 39 from Danio rerio (Zebrafish).